A 463-amino-acid chain; its full sequence is Asparagine--tRNA ligase (463 aa).

This sequence belongs to the class-II aminoacyl-tRNA synthetase family. As to quaternary structure, homodimer.

The protein localises to the cytoplasm. The catalysed reaction is tRNA(Asn) + L-asparagine + ATP = L-asparaginyl-tRNA(Asn) + AMP + diphosphate + H(+). This Clostridium tetani (strain Massachusetts / E88) protein is Asparagine--tRNA ligase.